Reading from the N-terminus, the 496-residue chain is Cytochrome P450 71B12 (496 aa).

Residues 2-22 (SLWYIIVAFVFFSSMIIVRII) form a helical membrane-spanning segment. Cys-436 is a heme binding site.

It belongs to the cytochrome P450 family. Heme serves as cofactor.

It localises to the membrane. The sequence is that of Cytochrome P450 71B12 (CYP71B12) from Arabidopsis thaliana (Mouse-ear cress).